Reading from the N-terminus, the 341-residue chain is MQKNTEPVQEAINITPSQQMIASSMGALLTSFFVTPLDVVKIRLQAQSKPFIKGKCFVYCNGLMDHLCLCTNGNGKAWYRAPGHFRGTTDAFVQIIRNEGIKSLWSGLPPTLVMAVPATVIYFTCYDQLRDILIRSMPERAEIASLVAGATARLWSATLISPLELIRTKMQYRPLSYKELRQCIQSSVAKDGWLALWKGWGPTVLRDVPFSALYWHNYELVKQSLCQRYNTLQPTFAISFTAGAVSGSIAAIVTLPFDVVKTRRQVEVGELEMFTYSQKRSSSTWKLMRAIVIENGFGGLFAGLIPRLIKVAPACAIMISTYEFGKSFFRKLNNERQLKSL.

3 Solcar repeats span residues 14–132, 140–224, and 234–328; these read ITPS…LRDI, RAEI…VKQS, and PTFA…GKSF. Transmembrane regions (helical) follow at residues 20–40, 104–124, 143–163, 200–221, 236–256, and 299–319; these read MIAS…LDVV, LWSG…IYFT, IASL…ISPL, WGPT…YELV, FAIS…VTLP, and GLFA…AIMI.

It belongs to the mitochondrial carrier (TC 2.A.29) family.

The protein resides in the mitochondrion inner membrane. The catalysed reaction is glutathione(in) = glutathione(out). In terms of biological role, probable mitochondrial transporter required for glutathione import into mitochondria. Glutathione, which plays key roles in oxidative metabolism, is produced exclusively in the cytosol and is imported in many organelles. Mitochondrial glutathione is required for the activity and stability of proteins containing iron-sulfur clusters. The polypeptide is Mitochondrial glutathione transporter SLC25A40 (Xenopus tropicalis (Western clawed frog)).